The primary structure comprises 194 residues: Putative 3-methyladenine DNA glycosylase (194 aa).

This sequence belongs to the DNA glycosylase MPG family.

This chain is Putative 3-methyladenine DNA glycosylase, found in Chlamydia felis (strain Fe/C-56) (Chlamydophila felis).